The following is a 218-amino-acid chain: Probable GTP-binding protein EngB (218 aa).

Residues 44 to 218 (DRIEVCFAGR…LRATIATIET (175 aa)) enclose the EngB-type G domain. Residues 52 to 59 (GRSNVGKS), 79 to 83 (GRTQE), 97 to 100 (DLPG), 164 to 167 (TKSD), and 198 to 200 (TSS) contribute to the GTP site. The Mg(2+) site is built by S59 and T81.

This sequence belongs to the TRAFAC class TrmE-Era-EngA-EngB-Septin-like GTPase superfamily. EngB GTPase family. Mg(2+) serves as cofactor.

Necessary for normal cell division and for the maintenance of normal septation. This chain is Probable GTP-binding protein EngB, found in Jannaschia sp. (strain CCS1).